Reading from the N-terminus, the 106-residue chain is Nucleoid-associated protein BBta_7345 (106 aa).

It belongs to the YbaB/EbfC family. As to quaternary structure, homodimer.

It localises to the cytoplasm. The protein localises to the nucleoid. Its function is as follows. Binds to DNA and alters its conformation. May be involved in regulation of gene expression, nucleoid organization and DNA protection. This chain is Nucleoid-associated protein BBta_7345, found in Bradyrhizobium sp. (strain BTAi1 / ATCC BAA-1182).